A 201-amino-acid chain; its full sequence is Holliday junction branch migration complex subunit RuvA (201 aa).

Residues 1 to 64 (MYEYIRGQFQ…EDFIGLYGFT (64 aa)) are domain I. The domain II stretch occupies residues 65 to 143 (TREELEMFKL…PDELTSEEGE (79 aa)). A flexible linker region spans residues 144-152 (LIEGINDNS). The domain III stretch occupies residues 153–201 (DYSFNINETLSALMALGYTEKEAQKALEKVDKTLSIENMIKESLKLLMR).

Belongs to the RuvA family. In terms of assembly, homotetramer. Forms an RuvA(8)-RuvB(12)-Holliday junction (HJ) complex. HJ DNA is sandwiched between 2 RuvA tetramers; dsDNA enters through RuvA and exits via RuvB. An RuvB hexamer assembles on each DNA strand where it exits the tetramer. Each RuvB hexamer is contacted by two RuvA subunits (via domain III) on 2 adjacent RuvB subunits; this complex drives branch migration. In the full resolvosome a probable DNA-RuvA(4)-RuvB(12)-RuvC(2) complex forms which resolves the HJ.

The protein localises to the cytoplasm. Functionally, the RuvA-RuvB-RuvC complex processes Holliday junction (HJ) DNA during genetic recombination and DNA repair, while the RuvA-RuvB complex plays an important role in the rescue of blocked DNA replication forks via replication fork reversal (RFR). RuvA specifically binds to HJ cruciform DNA, conferring on it an open structure. The RuvB hexamer acts as an ATP-dependent pump, pulling dsDNA into and through the RuvAB complex. HJ branch migration allows RuvC to scan DNA until it finds its consensus sequence, where it cleaves and resolves the cruciform DNA. The polypeptide is Holliday junction branch migration complex subunit RuvA (Clostridium perfringens (strain ATCC 13124 / DSM 756 / JCM 1290 / NCIMB 6125 / NCTC 8237 / Type A)).